We begin with the raw amino-acid sequence, 309 residues long: Methionyl-tRNA formyltransferase (309 aa).

107–110 serves as a coordination point for (6S)-5,6,7,8-tetrahydrofolate; it reads SLLP.

This sequence belongs to the Fmt family.

The catalysed reaction is L-methionyl-tRNA(fMet) + (6R)-10-formyltetrahydrofolate = N-formyl-L-methionyl-tRNA(fMet) + (6S)-5,6,7,8-tetrahydrofolate + H(+). Functionally, attaches a formyl group to the free amino group of methionyl-tRNA(fMet). The formyl group appears to play a dual role in the initiator identity of N-formylmethionyl-tRNA by promoting its recognition by IF2 and preventing the misappropriation of this tRNA by the elongation apparatus. The sequence is that of Methionyl-tRNA formyltransferase from Borrelia recurrentis (strain A1).